The following is a 1112-amino-acid chain: Rho GTPase-activating protein 7 (1112 aa).

One can recognise an SAM domain in the interval 37–104 (LAEIEAKEAC…LNKCAVMKLE (68 aa)). Residues Ser112, Ser115, and Ser155 each carry the phosphoserine modification. 4 disordered regions span residues 146-203 (SPKQ…APAR), 318-350 (RSISSSTQTSSSSSQSETSSNVSTPSPVTRTRS), 405-459 (PKAL…VSSR), and 512-574 (SDEG…GVGA). Residues 183-193 (VHSTGSLTTHA) are compositionally biased toward polar residues. The segment at 296-468 (QLNCVEISAL…RLSIYDNVPG (173 aa)) is focal adhesion-targeting (FAT). 2 stretches are compositionally biased toward low complexity: residues 320-348 (ISSSTQTSSSSSQSETSSNVSTPSPVTRT) and 409-423 (SNGSFSPSGNNSSVN). A Phosphoserine modification is found at Ser343. Basic and acidic residues predominate over residues 437–446 (LRRENSSPKE). The span at 520–532 (ALDSVSPCPSSPK) shows a compositional bias: polar residues. Residues 534-544 (IHLDVDNDRAT) are compositionally biased toward basic and acidic residues. Positions 547-556 (DLDSTGNSLN) are enriched in polar residues. The segment at 635–657 (KHGFSWAVPKFMKRIKVPDYKDR) is polybasic cluster (PBR). The 207-residue stretch at 662–868 (VPLTVNVQRT…HMIAECKKLF (207 aa)) folds into the Rho-GAP domain. The region spanning 898 to 1105 (CNDDSADYQH…RDSFSHQNTE (208 aa)) is the START domain.

In terms of assembly, interacts with EF1A1, facilitates EF1A1 distribution to the membrane periphery and ruffles upon growth factor stimulation and suppresses cell migration. Interacts with tensin TNS1 (via N-terminus); the interaction is decreased by phosphorylation of TNS1. Interacts with TNS3 and PTEN; in resting cells, interacts with TNS3 (via C2 tensin-type domain) but, following growth factor stimulation, TNS3 and PTEN are phosphorylated which leads to weakened interaction with TNS3 and enhanced interaction with PTEN. Interacts (via C-terminus) with tensin TNS4 (via SH2 domain); the interaction is independent of tyrosine phosphorylation of DLC1.

It is found in the cytoplasm. It localises to the cell junction. Its subcellular location is the focal adhesion. The protein resides in the membrane. Functions as a GTPase-activating protein for the small GTPases RHOA, RHOB, RHOC and CDC42, terminating their downstream signaling. This induces morphological changes and detachment through cytoskeletal reorganization, playing a critical role in biological processes such as cell migration and proliferation. Also functions in vivo as an activator of the phospholipase PLCD1. Active DLC1 increases cell migration velocity but reduces directionality. Required for growth factor-induced epithelial cell migration; in resting cells, interacts with TNS3 while PTEN interacts with the p85 regulatory subunit of the PI3K kinase complex but growth factor stimulation induces phosphorylation of TNS3 and PTEN, causing them to change their binding preference so that PTEN interacts with DLC1 and TNS3 interacts with p85. The PTEN-DLC1 complex translocates to the posterior of migrating cells to activate RHOA while the TNS3-p85 complex translocates to the leading edge of migrating cells to promote RAC1 activation. The sequence is that of Rho GTPase-activating protein 7 (DLC1) from Bos taurus (Bovine).